Here is a 1319-residue protein sequence, read N- to C-terminus: Girdin homolog (1319 aa).

The Calponin-homology (CH) domain occupies 6–118 (ENWSHPLAFW…KLLLLLLGCA (113 aa)). 3 coiled-coil regions span residues 141–173 (ELAA…TDEV), 218–690 (TSEL…ADLI), and 732–1096 (KRER…KKST). Residues 166-222 (KMKETDEVGGGGGSIEDVDSDDMESSTTSSSNGEIAIKQQDQSFLMSRSTSPTSELR) are disordered. Residues 204-222 (QQDQSFLMSRSTSPTSELR) are compositionally biased toward polar residues. Disordered regions lie at residues 1112 to 1236 (INRR…SPAH) and 1289 to 1308 (NVNL…LKPN). Over residues 1118–1131 (TSNGGSTTEDSSVY) the composition is skewed to polar residues.

Belongs to the CCDC88 family. In terms of tissue distribution, expressed in AQR and PQR gas-sensing neurons in hermaphrodites (at protein level).

The protein localises to the cytoplasm. The protein resides in the cytoskeleton. Its subcellular location is the cilium basal body. It is found in the microtubule organizing center. It localises to the centrosome. The protein localises to the centriole. Functionally, scaffolding protein that plays a role in ciliogenesis, cilium positioning and dendrite anchoring in sensory amphid neurons including AWB, AWA, AWC, ADL and ASI, the phasmid neurons PHA and PHB and the gas sensing neurons AQR, PQR, URX and BAG. Its role in cilium positioning may be through regulation of the localization of cell adhesion proteins such as the apical junction protein ajm-1, and the ciliary scaffolding protein Rootletin/che-10. Plays a more prominent role in regulating dendrite morphogenesis in AQR than in PQR neurons. Regulates localization of hmr-1 to the distal AQR dendrite. During embryonic elongation, required for the anchoring of URX and BAG dendrites to the presumptive nose. The polypeptide is Girdin homolog (Caenorhabditis elegans).